A 648-amino-acid chain; its full sequence is 1-deoxy-D-xylulose-5-phosphate synthase (648 aa).

Thiamine diphosphate is bound by residues His79 and 120-122 (GHA). Asp152 is a binding site for Mg(2+). Thiamine diphosphate contacts are provided by residues 153–154 (GS), Asn181, Phe293, and Glu377. A Mg(2+)-binding site is contributed by Asn181.

It belongs to the transketolase family. DXPS subfamily. In terms of assembly, homodimer. Mg(2+) serves as cofactor. It depends on thiamine diphosphate as a cofactor.

It catalyses the reaction D-glyceraldehyde 3-phosphate + pyruvate + H(+) = 1-deoxy-D-xylulose 5-phosphate + CO2. The protein operates within metabolic intermediate biosynthesis; 1-deoxy-D-xylulose 5-phosphate biosynthesis; 1-deoxy-D-xylulose 5-phosphate from D-glyceraldehyde 3-phosphate and pyruvate: step 1/1. Functionally, catalyzes the acyloin condensation reaction between C atoms 2 and 3 of pyruvate and glyceraldehyde 3-phosphate to yield 1-deoxy-D-xylulose-5-phosphate (DXP). The chain is 1-deoxy-D-xylulose-5-phosphate synthase from Bacteroides fragilis (strain ATCC 25285 / DSM 2151 / CCUG 4856 / JCM 11019 / LMG 10263 / NCTC 9343 / Onslow / VPI 2553 / EN-2).